The primary structure comprises 222 residues: Niacin transporter NiaX (222 aa).

5 helical membrane passes run 34–54 (NLII…MMPV), 72–94 (MAAM…LGFM), 101–120 (TIWL…AYVL), 135–155 (IFNF…VYAF), and 167–187 (ALLN…MIDF).

The protein belongs to the vitamin uptake transporter (VUT/ECF) (TC 2.A.88) family. As to quaternary structure, in L.lactis forms a stable complex with EcfA, EcfA' and EcfT. In E.coli forms a stable energy-coupling factor (ECF) transporter complex composed of 2 membrane-embedded substrate-binding proteins (S component), 2 ATP-binding proteins (A and A' components) and 2 transmembrane proteins (T component), probably with a stoichiometry of 2:1:1:2. May be able to interact with more than 1 S component at a time.

The protein resides in the cell membrane. Probably a niacin-binding protein that interacts with the energy-coupling factor (ECF) ABC-transporter complex. Unlike classic ABC transporters this ECF transporter provides the energy necessary to transport a number of different substrates. The substrates themselves are bound by transmembrane, not extracytoplasmic soluble proteins. Uptake of niacin into proteosomes containing EcfA1A2T and Niax has been demonstrated. Uptake requires hydrolyzable Mg-ATP and is substrate-specific; NiaX-containing proteosomes did not transport riboflavin. The chain is Niacin transporter NiaX (niaX) from Lactococcus lactis subsp. cremoris (strain MG1363).